A 138-amino-acid polypeptide reads, in one-letter code: Biopolymer transport protein exbD1 (138 aa).

Residues 1 to 16 (MIKSSAKHNDFGLTPD) lie on the Cytoplasmic side of the membrane. The helical transmembrane segment at 17-37 (LTPLLDIIFIVMVFLLLTASV) threads the bilayer. The Periplasmic segment spans residues 38-138 (RLESLEVALP…TQLLTEPSHS (101 aa)).

This sequence belongs to the ExbD/TolR family. As to quaternary structure, the accessory proteins ExbB and ExbD seem to form a complex with TonB.

The protein resides in the cell inner membrane. Involved in the TonB-dependent energy-dependent transport of various receptor-bound substrates. The sequence is that of Biopolymer transport protein exbD1 (exbD1) from Vibrio cholerae serotype O1 (strain ATCC 39315 / El Tor Inaba N16961).